The chain runs to 208 residues: Small ribosomal subunit protein eS8 (208 aa).

Residues 1-27 form a disordered region; the sequence is MGISRDNWHKRRKTGGKRKPYHKKRKY. Residue G2 is the site of N-myristoyl glycine attachment. A compositionally biased stretch (basic residues) spans 8–26; that stretch reads WHKRRKTGGKRKPYHKKRK. N6-acetyllysine is present on residues K37 and K128. Phosphothreonine is present on T130. S160 is subject to Phosphoserine. Glycyl lysine isopeptide (Lys-Gly) (interchain with G-Cter in SUMO2) cross-links involve residues K170 and K193.

The protein belongs to the eukaryotic ribosomal protein eS8 family. As to quaternary structure, component of the small ribosomal subunit. Identified in a IGF2BP1-dependent mRNP granule complex containing untranslated mRNAs. Part of the small subunit (SSU) processome, composed of more than 70 proteins and the RNA chaperone small nucleolar RNA (snoRNA) U3.

Its subcellular location is the cytoplasm. It is found in the membrane. It localises to the nucleus. The protein resides in the nucleolus. Functionally, component of the small ribosomal subunit. The ribosome is a large ribonucleoprotein complex responsible for the synthesis of proteins in the cell. Part of the small subunit (SSU) processome, first precursor of the small eukaryotic ribosomal subunit. During the assembly of the SSU processome in the nucleolus, many ribosome biogenesis factors, an RNA chaperone and ribosomal proteins associate with the nascent pre-rRNA and work in concert to generate RNA folding, modifications, rearrangements and cleavage as well as targeted degradation of pre-ribosomal RNA by the RNA exosome. The protein is Small ribosomal subunit protein eS8 (Rps8) of Mus musculus (Mouse).